A 37-amino-acid polypeptide reads, in one-letter code: MIEALPSGIVLGLIPITLAGLFVTAYSQYRRGDQLDI.

A helical membrane pass occupies residues 5–25 (LPSGIVLGLIPITLAGLFVTA).

This sequence belongs to the PetG family. As to quaternary structure, the 4 large subunits of the cytochrome b6-f complex are cytochrome b6, subunit IV (17 kDa polypeptide, PetD), cytochrome f and the Rieske protein, while the 4 small subunits are PetG, PetL, PetM and PetN. The complex functions as a dimer.

The protein localises to the plastid. It localises to the chloroplast thylakoid membrane. Its function is as follows. Component of the cytochrome b6-f complex, which mediates electron transfer between photosystem II (PSII) and photosystem I (PSI), cyclic electron flow around PSI, and state transitions. PetG is required for either the stability or assembly of the cytochrome b6-f complex. The polypeptide is Cytochrome b6-f complex subunit 5 (Pinus thunbergii (Japanese black pine)).